Here is a 244-residue protein sequence, read N- to C-terminus: 5-oxoprolinase subunit A (244 aa).

Belongs to the LamB/PxpA family. In terms of assembly, forms a complex composed of PxpA, PxpB and PxpC.

The enzyme catalyses 5-oxo-L-proline + ATP + 2 H2O = L-glutamate + ADP + phosphate + H(+). Functionally, catalyzes the cleavage of 5-oxoproline to form L-glutamate coupled to the hydrolysis of ATP to ADP and inorganic phosphate. The sequence is that of 5-oxoprolinase subunit A from Citrobacter koseri (strain ATCC BAA-895 / CDC 4225-83 / SGSC4696).